The sequence spans 361 residues: Mitogen-activated protein kinase 14 (361 aa).

The 285-residue stretch at 25 to 309 (YQNLTPVGSG…AAEALAHSYF (285 aa)) folds into the Protein kinase domain. Residues 31-39 (VGSGAYGSV) and lysine 54 each bind ATP. Aspartate 151 (proton acceptor) is an active-site residue. At threonine 181 the chain carries Phosphothreonine. The short motif at 181–183 (TGY) is the TXY element. Tyrosine 183 carries the phosphotyrosine modification.

This sequence belongs to the protein kinase superfamily. CMGC Ser/Thr protein kinase family. MAP kinase subfamily. Requires Mg(2+) as cofactor. Dually phosphorylated on Thr-181 and Tyr-183, which activates the enzyme.

It carries out the reaction L-seryl-[protein] + ATP = O-phospho-L-seryl-[protein] + ADP + H(+). The enzyme catalyses L-threonyl-[protein] + ATP = O-phospho-L-threonyl-[protein] + ADP + H(+). Its activity is regulated as follows. Activated by tyrosine and threonine phosphorylation. Serine/threonine kinase which acts as an essential component of the MAP kinase signal transduction pathway. mapk14a is one of the four p38 MAPKs which play an important role in the cascades of cellular responses evoked by extracellular stimuli such as pro-inflammatory cytokines or physical stress leading to direct activation of transcription factors. Accordingly, p38 MAPKs phosphorylate a broad range of proteins and it has been estimated that they may have approximately 200 to 300 substrates each. Some of the targets are downstream kinases which are activated through phosphorylation and further phosphorylate additional targets. MPK2 is activated by upstream MAPKK/MAPKKK and stimulates MAPKAP kinase 2 to phosphorylate small heat shock proteins. Does not phosphorylate myelin basic protein or MAPKAP kinase 1. The chain is Mitogen-activated protein kinase 14 (mapk14) from Xenopus laevis (African clawed frog).